Reading from the N-terminus, the 464-residue chain is UPF0210 protein MA_1691 (464 aa).

The protein belongs to the UPF0210 family.

This is UPF0210 protein MA_1691 from Methanosarcina acetivorans (strain ATCC 35395 / DSM 2834 / JCM 12185 / C2A).